Here is a 438-residue protein sequence, read N- to C-terminus: Gamma-glutamyl phosphate reductase (438 aa).

The protein belongs to the gamma-glutamyl phosphate reductase family.

The protein resides in the cytoplasm. The enzyme catalyses L-glutamate 5-semialdehyde + phosphate + NADP(+) = L-glutamyl 5-phosphate + NADPH + H(+). Its pathway is amino-acid biosynthesis; L-proline biosynthesis; L-glutamate 5-semialdehyde from L-glutamate: step 2/2. Its function is as follows. Catalyzes the NADPH-dependent reduction of L-glutamate 5-phosphate into L-glutamate 5-semialdehyde and phosphate. The product spontaneously undergoes cyclization to form 1-pyrroline-5-carboxylate. This chain is Gamma-glutamyl phosphate reductase, found in Prochlorococcus marinus (strain MIT 9313).